Here is a 365-residue protein sequence, read N- to C-terminus: UDP-N-acetylglucosamine--N-acetylmuramyl-(pentapeptide) pyrophosphoryl-undecaprenol N-acetylglucosamine transferase (365 aa).

Residues 12 to 14, Asn-123, Arg-166, Ser-194, and Gln-295 each bind UDP-N-acetyl-alpha-D-glucosamine; that span reads TGG.

The protein belongs to the glycosyltransferase 28 family. MurG subfamily.

The protein localises to the cell inner membrane. It catalyses the reaction di-trans,octa-cis-undecaprenyl diphospho-N-acetyl-alpha-D-muramoyl-L-alanyl-D-glutamyl-meso-2,6-diaminopimeloyl-D-alanyl-D-alanine + UDP-N-acetyl-alpha-D-glucosamine = di-trans,octa-cis-undecaprenyl diphospho-[N-acetyl-alpha-D-glucosaminyl-(1-&gt;4)]-N-acetyl-alpha-D-muramoyl-L-alanyl-D-glutamyl-meso-2,6-diaminopimeloyl-D-alanyl-D-alanine + UDP + H(+). It participates in cell wall biogenesis; peptidoglycan biosynthesis. Its function is as follows. Cell wall formation. Catalyzes the transfer of a GlcNAc subunit on undecaprenyl-pyrophosphoryl-MurNAc-pentapeptide (lipid intermediate I) to form undecaprenyl-pyrophosphoryl-MurNAc-(pentapeptide)GlcNAc (lipid intermediate II). The chain is UDP-N-acetylglucosamine--N-acetylmuramyl-(pentapeptide) pyrophosphoryl-undecaprenol N-acetylglucosamine transferase from Phenylobacterium zucineum (strain HLK1).